Consider the following 522-residue polypeptide: MSLFSSLVHNVRGQLIARIISFAINMYLLRRINNDVLGLVNVRLTLLYSSILFLTREPLRKAEIIRGSLPKFINLLWLSPIISTVISVVCVYLWYAFSSTSDEVSWSVLLSFPISAIIESIAEPFSVISLRLESKCGSLAQHFAIGQGMLICVKRIFVLAGLFMFPGMYHLELFAYAQYIGAIAYLLFNFVAFYIYIRNKSIPELEQFSTFSDLFPKFSEGIDRDSIHAVFTMFSHSILKQLLTDGSAYVMTFTELLSLKDQAVYDAVERVGSIIVRTILSPIDENCNAYFSNTIRKESSVFNKNTDNHDDLVDTLSKVLHVVGVIGFVACTFGIPYSPVVISLYGGKLLSENGGALLLSLYSGYILVTAINGITEGFAMASMDNRQIFTHGKFLFVTSIIHLIINYVLCVYMNSAGFIVANIINMSVRIIYNWRTIREYLGDKCPSFTEVLPTGQTSIFLGVSLLATSFTYLLFATTPGLSYTLAHIAIGAVCLILTAQDTAQHDSVFTVIVDSLAKKHRD.

Transmembrane regions (helical) follow at residues 35-55 (DVLG…LFLT), 75-95 (LLWL…YLWY), 108-128 (VLLS…FSVI), 143-165 (FAIG…LFMF), 177-197 (AQYI…YIYI), 322-342 (VVGV…PVVI), 354-374 (GGAL…INGI), 400-420 (IIHL…GFIV), 457-477 (TSIF…LFAT), and 479-499 (PGLS…ILTA).

It belongs to the RFT1 family.

It is found in the endoplasmic reticulum membrane. Its pathway is protein modification; protein glycosylation. Functionally, intramembrane glycolipid transporter that operates in the biosynthetic pathway of dolichol-linked oligosaccharides, the glycan precursors employed in protein asparagine (N)-glycosylation. The sequential addition of sugars to dolichol pyrophosphate produces dolichol-linked oligosaccharides containing fourteen sugars, including two GlcNAcs, nine mannoses and three glucoses. Once assembled, the oligosaccharide is transferred from the lipid to nascent proteins by oligosaccharyltransferases. The assembly of dolichol-linked oligosaccharides begins on the cytosolic side of the endoplasmic reticulum membrane and finishes in its lumen. RFT1 could mediate the translocation of the cytosolically oriented intermediate DolPP-GlcNAc2Man5, produced by ALG11, into the ER lumen where dolichol-linked oligosaccharides assembly continues. However, the intramembrane lipid transporter activity could not be confirmed in vitro. This is Man(5)GlcNAc(2)-PP-dolichol translocation protein RFT1 from Caenorhabditis elegans.